The chain runs to 540 residues: tRNA-2-methylthio-N(6)-dimethylallyladenosine synthase (540 aa).

Residues 41-157 (RTYEVRTFGC…LPTLLERSAH (117 aa)) enclose the MTTase N-terminal domain. [4Fe-4S] cluster contacts are provided by cysteine 50, cysteine 86, cysteine 120, cysteine 194, cysteine 198, and cysteine 201. The region spanning 180–416 (RESAYSGWVS…IALQERIQAE (237 aa)) is the Radical SAM core domain. Residues 419–486 (KELVGTTQEL…PFFLIADGPL (68 aa)) form the TRAM domain.

Belongs to the methylthiotransferase family. MiaB subfamily. In terms of assembly, monomer. [4Fe-4S] cluster serves as cofactor.

It is found in the cytoplasm. The enzyme catalyses N(6)-dimethylallyladenosine(37) in tRNA + (sulfur carrier)-SH + AH2 + 2 S-adenosyl-L-methionine = 2-methylsulfanyl-N(6)-dimethylallyladenosine(37) in tRNA + (sulfur carrier)-H + 5'-deoxyadenosine + L-methionine + A + S-adenosyl-L-homocysteine + 2 H(+). Catalyzes the methylthiolation of N6-(dimethylallyl)adenosine (i(6)A), leading to the formation of 2-methylthio-N6-(dimethylallyl)adenosine (ms(2)i(6)A) at position 37 in tRNAs that read codons beginning with uridine. This Corynebacterium urealyticum (strain ATCC 43042 / DSM 7109) protein is tRNA-2-methylthio-N(6)-dimethylallyladenosine synthase.